A 1639-amino-acid polypeptide reads, in one-letter code: RIMS-binding protein 3A (1639 aa).

3 disordered regions span residues 1–22 (MAKD…SSPA), 215–240 (GSPD…CHAP), and 295–364 (SLDS…LTPS). A coiled-coil region spans residues 21 to 143 (PAAAVLENQR…ELQRQLAEEL (123 aa)). Over residues 326–339 (SPPPSPLPPPPPPS) the composition is skewed to pro residues. Coiled-coil stretches lie at residues 409–442 (QADE…QETN) and 480–619 (LAKD…AEEN). The tract at residues 697-811 (CRPGHPPEQP…DRDTASEVDD (115 aa)) is disordered. 2 stretches are compositionally biased toward polar residues: residues 707-718 (WETSQMPESQVK) and 761-775 (SVPQ…SQPL). The segment covering 776-790 (SKKTSSQSNSSSEGS) has biased composition (low complexity). Residues 832 to 899 (PKLKIFMAQY…PSNFVEQIPD (68 aa)) enclose the SH3 1 domain. Fibronectin type-III domains follow at residues 995-1083 (APMQ…TLLA) and 1088-1184 (PPLD…IPED). Disordered regions lie at residues 1251 to 1273 (PRRQ…GAGS) and 1292 to 1330 (QKSP…FIHL). Polar residues predominate over residues 1293-1305 (KSPQNHRPPSVSD). SH3 domains lie at 1452–1520 (TPAR…EMEV) and 1569–1636 (WTPK…HMSL).

The protein belongs to the RIMBP family. Interacts with LRGUK (via guanylate kinase-like domain). Interacts (via C-terminus) with HOOK1 (via coiled-coil region).

Its subcellular location is the cytoplasm. The protein localises to the cytoskeleton. Probable component of the manchette, a microtubule-based structure which plays a key role in sperm head morphogenesis during late stages of sperm development. This chain is RIMS-binding protein 3A (RIMBP3), found in Homo sapiens (Human).